The sequence spans 137 residues: ATP synthase epsilon chain, chloroplastic (137 aa).

This sequence belongs to the ATPase epsilon chain family. F-type ATPases have 2 components, CF(1) - the catalytic core - and CF(0) - the membrane proton channel. CF(1) has five subunits: alpha(3), beta(3), gamma(1), delta(1), epsilon(1). CF(0) has three main subunits: a, b and c.

The protein localises to the plastid. The protein resides in the chloroplast thylakoid membrane. Functionally, produces ATP from ADP in the presence of a proton gradient across the membrane. This chain is ATP synthase epsilon chain, chloroplastic, found in Bigelowiella natans (Pedinomonas minutissima).